The sequence spans 378 residues: Erythronate-4-phosphate dehydrogenase (378 aa).

The substrate site is built by Ser45 and Thr66. 2 residues coordinate NAD(+): Asp146 and Thr175. Arg208 is an active-site residue. NAD(+) is bound at residue Asp232. Residue Glu237 is part of the active site. His254 acts as the Proton donor in catalysis. Gly257 serves as a coordination point for NAD(+). Substrate is bound at residue Tyr258.

This sequence belongs to the D-isomer specific 2-hydroxyacid dehydrogenase family. PdxB subfamily. Homodimer.

Its subcellular location is the cytoplasm. It carries out the reaction 4-phospho-D-erythronate + NAD(+) = (R)-3-hydroxy-2-oxo-4-phosphooxybutanoate + NADH + H(+). It functions in the pathway cofactor biosynthesis; pyridoxine 5'-phosphate biosynthesis; pyridoxine 5'-phosphate from D-erythrose 4-phosphate: step 2/5. Catalyzes the oxidation of erythronate-4-phosphate to 3-hydroxy-2-oxo-4-phosphonooxybutanoate. In Escherichia coli O157:H7, this protein is Erythronate-4-phosphate dehydrogenase.